We begin with the raw amino-acid sequence, 654 residues long: Fructose-1,6-bisphosphatase class 3 (654 aa).

The protein belongs to the FBPase class 3 family. It depends on Mn(2+) as a cofactor.

It catalyses the reaction beta-D-fructose 1,6-bisphosphate + H2O = beta-D-fructose 6-phosphate + phosphate. It functions in the pathway carbohydrate biosynthesis; gluconeogenesis. This chain is Fructose-1,6-bisphosphatase class 3, found in Staphylococcus haemolyticus (strain JCSC1435).